A 399-amino-acid polypeptide reads, in one-letter code: Leu/Ile/Val-binding protein homolog 7 (399 aa).

The N-terminal stretch at 1–22 is a signal peptide; it reads MEKHLIALSVAALLAGAAPASA.

This sequence belongs to the leucine-binding protein family.

Component of an amino-acid transport system. The protein is Leu/Ile/Val-binding protein homolog 7 of Brucella suis biovar 1 (strain 1330).